Here is a 201-residue protein sequence, read N- to C-terminus: UPF0301 protein MMAR_0053 (201 aa).

The protein belongs to the UPF0301 (AlgH) family.

This Mycobacterium marinum (strain ATCC BAA-535 / M) protein is UPF0301 protein MMAR_0053.